We begin with the raw amino-acid sequence, 300 residues long: RNA polymerase sigma factor RpoH (300 aa).

Residues 53–122 (LVTSHLRLVA…IQEYILRSWS (70 aa)) form a sigma-70 factor domain-2 region. Residues 77–80 (EVVS) carry the Interaction with polymerase core subunit RpoC motif. The segment at 231 to 282 (AMGVLNDRERRIFEARRLAEDPVTLEELSSEFDISRERVRQIEVRAFEKVQE) is sigma-70 factor domain-4. Positions 255–274 (LEELSSEFDISRERVRQIEV) form a DNA-binding region, H-T-H motif.

This sequence belongs to the sigma-70 factor family. RpoH subfamily. Interacts with the RNA polymerase core enzyme.

Its subcellular location is the cytoplasm. In terms of biological role, sigma factors are initiation factors that promote the attachment of RNA polymerase to specific initiation sites and are then released. This sigma factor is involved in regulation of expression of heat shock genes. This Rhizobium radiobacter (Agrobacterium tumefaciens) protein is RNA polymerase sigma factor RpoH.